The following is a 439-amino-acid chain: Signal recognition particle 54 kDa protein (439 aa).

GTP contacts are provided by residues 104-111, 184-188, and 242-245; these read GLQGSGKT, DTAGR, and SKLD.

The protein belongs to the GTP-binding SRP family. SRP54 subfamily. In terms of assembly, part of the signal recognition particle protein translocation system, which is composed of SRP and FtsY. Archaeal SRP consists of a 7S RNA molecule of 300 nucleotides and two protein subunits: SRP54 and SRP19.

The protein localises to the cytoplasm. The enzyme catalyses GTP + H2O = GDP + phosphate + H(+). Functionally, involved in targeting and insertion of nascent membrane proteins into the cytoplasmic membrane. Binds to the hydrophobic signal sequence of the ribosome-nascent chain (RNC) as it emerges from the ribosomes. The SRP-RNC complex is then targeted to the cytoplasmic membrane where it interacts with the SRP receptor FtsY. The protein is Signal recognition particle 54 kDa protein of Methanococcoides burtonii (strain DSM 6242 / NBRC 107633 / OCM 468 / ACE-M).